Here is a 188-residue protein sequence, read N- to C-terminus: Ribosome-recycling factor (188 aa).

This sequence belongs to the RRF family.

It localises to the cytoplasm. Functionally, responsible for the release of ribosomes from messenger RNA at the termination of protein biosynthesis. May increase the efficiency of translation by recycling ribosomes from one round of translation to another. This chain is Ribosome-recycling factor, found in Phenylobacterium zucineum (strain HLK1).